The chain runs to 219 residues: 2-hydroxy-3-keto-5-methylthiopentenyl-1-phosphate phosphatase (219 aa).

Belongs to the HAD-like hydrolase superfamily. MtnX family.

It catalyses the reaction 2-hydroxy-5-methylsulfanyl-3-oxopent-1-enyl phosphate + H2O = 1,2-dihydroxy-5-(methylsulfanyl)pent-1-en-3-one + phosphate. It functions in the pathway amino-acid biosynthesis; L-methionine biosynthesis via salvage pathway; L-methionine from S-methyl-5-thio-alpha-D-ribose 1-phosphate: step 4/6. Functionally, dephosphorylates 2-hydroxy-3-keto-5-methylthiopentenyl-1-phosphate (HK-MTPenyl-1-P) yielding 1,2-dihydroxy-3-keto-5-methylthiopentene (DHK-MTPene). This Bacillus cereus (strain ATCC 14579 / DSM 31 / CCUG 7414 / JCM 2152 / NBRC 15305 / NCIMB 9373 / NCTC 2599 / NRRL B-3711) protein is 2-hydroxy-3-keto-5-methylthiopentenyl-1-phosphate phosphatase.